Here is a 189-residue protein sequence, read N- to C-terminus: TATA-box-binding protein 1 (189 aa).

2 tandem repeats follow at residues Ile10–Leu86 and Val101–Leu179.

Belongs to the TBP family.

General factor that plays a role in the activation of archaeal genes transcribed by RNA polymerase. Binds specifically to the TATA box promoter element which lies close to the position of transcription initiation. The sequence is that of TATA-box-binding protein 1 (tbp1) from Haloferax volcanii (strain ATCC 29605 / DSM 3757 / JCM 8879 / NBRC 14742 / NCIMB 2012 / VKM B-1768 / DS2) (Halobacterium volcanii).